The following is a 369-amino-acid chain: Chorismate synthase (369 aa).

NADP(+) contacts are provided by arginine 48 and arginine 54. FMN contacts are provided by residues 125–127, 238–239, glycine 278, 293–297, and arginine 319; these read RSS, NA, and KPTSS.

This sequence belongs to the chorismate synthase family. In terms of assembly, homotetramer. It depends on FMNH2 as a cofactor.

The enzyme catalyses 5-O-(1-carboxyvinyl)-3-phosphoshikimate = chorismate + phosphate. It functions in the pathway metabolic intermediate biosynthesis; chorismate biosynthesis; chorismate from D-erythrose 4-phosphate and phosphoenolpyruvate: step 7/7. Functionally, catalyzes the anti-1,4-elimination of the C-3 phosphate and the C-6 proR hydrogen from 5-enolpyruvylshikimate-3-phosphate (EPSP) to yield chorismate, which is the branch point compound that serves as the starting substrate for the three terminal pathways of aromatic amino acid biosynthesis. This reaction introduces a second double bond into the aromatic ring system. In Burkholderia pseudomallei (strain 1106a), this protein is Chorismate synthase.